Reading from the N-terminus, the 422-residue chain is Glutamate-1-semialdehyde 2,1-aminomutase (422 aa).

At Lys-265 the chain carries N6-(pyridoxal phosphate)lysine.

This sequence belongs to the class-III pyridoxal-phosphate-dependent aminotransferase family. HemL subfamily. Pyridoxal 5'-phosphate is required as a cofactor.

The protein resides in the cytoplasm. It catalyses the reaction (S)-4-amino-5-oxopentanoate = 5-aminolevulinate. Its pathway is porphyrin-containing compound metabolism; protoporphyrin-IX biosynthesis; 5-aminolevulinate from L-glutamyl-tRNA(Glu): step 2/2. The chain is Glutamate-1-semialdehyde 2,1-aminomutase from Methanococcoides burtonii (strain DSM 6242 / NBRC 107633 / OCM 468 / ACE-M).